The primary structure comprises 142 residues: uncharacterized protein (142 aa).

A disordered region spans residues 70 to 94 (PKSVSNSKKKKEKAEKGLLRPTTKP). A compositionally biased stretch (basic and acidic residues) spans 81–94 (EKAEKGLLRPTTKP).

This is an uncharacterized protein from Bacillus subtilis (strain 168).